We begin with the raw amino-acid sequence, 699 residues long: Elongation factor G (699 aa).

One can recognise a tr-type G domain in the interval 8-287; the sequence is EKLRNIGIVA…AVIDYLPSPI (280 aa). GTP-binding positions include 17–24, 85–89, and 139–142; these read AHIDAGKT, DTPGH, and NKMD.

This sequence belongs to the TRAFAC class translation factor GTPase superfamily. Classic translation factor GTPase family. EF-G/EF-2 subfamily.

Its subcellular location is the cytoplasm. In terms of biological role, catalyzes the GTP-dependent ribosomal translocation step during translation elongation. During this step, the ribosome changes from the pre-translocational (PRE) to the post-translocational (POST) state as the newly formed A-site-bound peptidyl-tRNA and P-site-bound deacylated tRNA move to the P and E sites, respectively. Catalyzes the coordinated movement of the two tRNA molecules, the mRNA and conformational changes in the ribosome. The chain is Elongation factor G (fusA) from Aquifex aeolicus (strain VF5).